A 238-amino-acid chain; its full sequence is Ribonuclease PH (238 aa).

Phosphate contacts are provided by residues arginine 86 and 124–126; that span reads GTR.

Belongs to the RNase PH family. Homohexameric ring arranged as a trimer of dimers.

It carries out the reaction tRNA(n+1) + phosphate = tRNA(n) + a ribonucleoside 5'-diphosphate. Phosphorolytic 3'-5' exoribonuclease that plays an important role in tRNA 3'-end maturation. Removes nucleotide residues following the 3'-CCA terminus of tRNAs; can also add nucleotides to the ends of RNA molecules by using nucleoside diphosphates as substrates, but this may not be physiologically important. Probably plays a role in initiation of 16S rRNA degradation (leading to ribosome degradation) during starvation. This Vibrio vulnificus (strain CMCP6) protein is Ribonuclease PH.